Here is a 157-residue protein sequence, read N- to C-terminus: Transcription elongation factor GreA (157 aa).

A coiled-coil region spans residues 9–30 (LEGAQQLKEELKRRKTTDRKRI).

Belongs to the GreA/GreB family.

In terms of biological role, necessary for efficient RNA polymerase transcription elongation past template-encoded arresting sites. The arresting sites in DNA have the property of trapping a certain fraction of elongating RNA polymerases that pass through, resulting in locked ternary complexes. Cleavage of the nascent transcript by cleavage factors such as GreA or GreB allows the resumption of elongation from the new 3'terminus. GreA releases sequences of 2 to 3 nucleotides. The chain is Transcription elongation factor GreA from Magnetococcus marinus (strain ATCC BAA-1437 / JCM 17883 / MC-1).